A 282-amino-acid chain; its full sequence is Bifunctional protein FolD (282 aa).

Residues 166 to 168 and Ser-191 contribute to the NADP(+) site; that span reads GRS.

The protein belongs to the tetrahydrofolate dehydrogenase/cyclohydrolase family. As to quaternary structure, homodimer.

The catalysed reaction is (6R)-5,10-methylene-5,6,7,8-tetrahydrofolate + NADP(+) = (6R)-5,10-methenyltetrahydrofolate + NADPH. It catalyses the reaction (6R)-5,10-methenyltetrahydrofolate + H2O = (6R)-10-formyltetrahydrofolate + H(+). It functions in the pathway one-carbon metabolism; tetrahydrofolate interconversion. Functionally, catalyzes the oxidation of 5,10-methylenetetrahydrofolate to 5,10-methenyltetrahydrofolate and then the hydrolysis of 5,10-methenyltetrahydrofolate to 10-formyltetrahydrofolate. This Acidovorax ebreus (strain TPSY) (Diaphorobacter sp. (strain TPSY)) protein is Bifunctional protein FolD.